A 459-amino-acid chain; its full sequence is Cysteine--tRNA ligase (459 aa).

A Zn(2+)-binding site is contributed by Cys-28. Positions 30–40 match the 'HIGH' region motif; it reads VTVYDLCHFGH. Positions 209, 234, and 238 each coordinate Zn(2+). Residues 266 to 270 carry the 'KMSKS' region motif; that stretch reads KMSKS. Residue Lys-269 coordinates ATP.

Belongs to the class-I aminoacyl-tRNA synthetase family. Monomer. Zn(2+) is required as a cofactor.

It is found in the cytoplasm. The enzyme catalyses tRNA(Cys) + L-cysteine + ATP = L-cysteinyl-tRNA(Cys) + AMP + diphosphate. The sequence is that of Cysteine--tRNA ligase from Actinobacillus succinogenes (strain ATCC 55618 / DSM 22257 / CCUG 43843 / 130Z).